The following is a 298-amino-acid chain: Protein DR_1172 (298 aa).

LEA-like repeat units follow at residues 48 to 117 (DAAQ…NVGQ), 128 to 197 (DQAK…DVAQ), and 201 to 270 (QGAQ…AGKQ). Residues 174–193 (VQDVKADASKAADQAKDKAQ) show a composition bias toward basic and acidic residues. Residues 174–298 (VQDVKADASK…MTGNTNTRKN (125 aa)) form a disordered region. Positions 194-208 (DVAQNVKQGAQQAAS) are enriched in low complexity. Positions 209-233 (DAKDKVQDVKADASRAADQAKDKAQ) are enriched in basic and acidic residues. Low complexity predominate over residues 275–298 (GSTTNNAGTAGNTGMTGNTNTRKN).

Belongs to the LEA type 1 family.

In Deinococcus radiodurans (strain ATCC 13939 / DSM 20539 / JCM 16871 / CCUG 27074 / LMG 4051 / NBRC 15346 / NCIMB 9279 / VKM B-1422 / R1), this protein is Protein DR_1172.